We begin with the raw amino-acid sequence, 343 residues long: Biotin synthase (343 aa).

The Radical SAM core domain maps to 36–254 (RQVQVSTLLS…IAVARIMMPR (219 aa)). 3 residues coordinate [4Fe-4S] cluster: Cys-51, Cys-55, and Cys-58. [2Fe-2S] cluster contacts are provided by Cys-95, Cys-126, Cys-186, and Arg-258.

It belongs to the radical SAM superfamily. Biotin synthase family. In terms of assembly, homodimer. [4Fe-4S] cluster serves as cofactor. The cofactor is [2Fe-2S] cluster.

It carries out the reaction (4R,5S)-dethiobiotin + (sulfur carrier)-SH + 2 reduced [2Fe-2S]-[ferredoxin] + 2 S-adenosyl-L-methionine = (sulfur carrier)-H + biotin + 2 5'-deoxyadenosine + 2 L-methionine + 2 oxidized [2Fe-2S]-[ferredoxin]. It participates in cofactor biosynthesis; biotin biosynthesis; biotin from 7,8-diaminononanoate: step 2/2. Catalyzes the conversion of dethiobiotin (DTB) to biotin by the insertion of a sulfur atom into dethiobiotin via a radical-based mechanism. The sequence is that of Biotin synthase from Erwinia tasmaniensis (strain DSM 17950 / CFBP 7177 / CIP 109463 / NCPPB 4357 / Et1/99).